The chain runs to 1294 residues: von Willebrand factor A domain-containing protein 3B (1294 aa).

One can recognise a VWFA domain in the interval 508 to 684 (CIYILIDTSH…EDLTLLVKEM (177 aa)). Disordered stretches follow at residues 732–754 (CAKP…KGPW), 778–803 (RSQM…SSRR), 1012–1036 (APGE…DPLK), and 1193–1247 (DTQD…PRTA). Positions 738 to 748 (DVDSTQTSSLN) are enriched in polar residues. Low complexity predominate over residues 778 to 787 (RSQMSSLRSS). The segment covering 1193–1202 (DTQDSREPRR) has biased composition (basic and acidic residues). The span at 1203–1212 (EKPRRKKRPA) shows a compositional bias: basic residues. Positions 1213-1236 (KQPLQQAAPSDSDGSSHGISSHGS) are enriched in low complexity.

It localises to the cytoplasm. This Homo sapiens (Human) protein is von Willebrand factor A domain-containing protein 3B (VWA3B).